The following is a 223-amino-acid chain: Twisted gastrulation protein homolog 1 (223 aa).

Residues 1–25 form the signal peptide; the sequence is MKLHYVAVLTLAILMFLTWLPASLS. Residues N52 and N81 are each glycosylated (N-linked (GlcNAc...) asparagine).

This sequence belongs to the twisted gastrulation protein family. Interacts with CHRD and BMP4. This interaction enhances CHRD/BMP4 complex formation. Interacts with BMP7.

The protein resides in the secreted. Its function is as follows. May be involved in dorsoventral axis formation. Seems to antagonize BMP signaling by forming ternary complexes with CHRD and BMPs, thereby preventing BMPs from binding to their receptors. In addition to the anti-BMP function, also has pro-BMP activity, partly mediated by cleavage and degradation of CHRD, which releases BMPs from ternary complexes. May be an important modulator of BMP-regulated cartilage development and chondrocyte differentiation. May play a role in thymocyte development. This Pongo abelii (Sumatran orangutan) protein is Twisted gastrulation protein homolog 1 (TWSG1).